A 271-amino-acid chain; its full sequence is Hydroxyethylthiazole kinase (271 aa).

Methionine 50 serves as a coordination point for substrate. 2 residues coordinate ATP: arginine 126 and threonine 172. Glycine 199 serves as a coordination point for substrate.

It belongs to the Thz kinase family. Mg(2+) serves as cofactor.

The enzyme catalyses 5-(2-hydroxyethyl)-4-methylthiazole + ATP = 4-methyl-5-(2-phosphooxyethyl)-thiazole + ADP + H(+). It functions in the pathway cofactor biosynthesis; thiamine diphosphate biosynthesis; 4-methyl-5-(2-phosphoethyl)-thiazole from 5-(2-hydroxyethyl)-4-methylthiazole: step 1/1. Functionally, catalyzes the phosphorylation of the hydroxyl group of 4-methyl-5-beta-hydroxyethylthiazole (THZ). The polypeptide is Hydroxyethylthiazole kinase (Akkermansia muciniphila (strain ATCC BAA-835 / DSM 22959 / JCM 33894 / BCRC 81048 / CCUG 64013 / CIP 107961 / Muc)).